The chain runs to 583 residues: Aspartate--tRNA ligase (583 aa).

Position 174 (Glu174) interacts with L-aspartate. The tract at residues 198–201 (QITK) is aspartate. Arg220 is a binding site for L-aspartate. ATP contacts are provided by residues 220–222 (RDE) and Gln229. Residue His443 participates in L-aspartate binding. Residue Glu477 coordinates ATP. Arg484 serves as a coordination point for L-aspartate. 529–532 (GLDR) lines the ATP pocket.

This sequence belongs to the class-II aminoacyl-tRNA synthetase family. Type 1 subfamily. In terms of assembly, homodimer.

Its subcellular location is the cytoplasm. The enzyme catalyses tRNA(Asp) + L-aspartate + ATP = L-aspartyl-tRNA(Asp) + AMP + diphosphate. Its function is as follows. Catalyzes the attachment of L-aspartate to tRNA(Asp) in a two-step reaction: L-aspartate is first activated by ATP to form Asp-AMP and then transferred to the acceptor end of tRNA(Asp). This is Aspartate--tRNA ligase from Streptococcus thermophilus (strain ATCC BAA-250 / LMG 18311).